The primary structure comprises 468 residues: V-type proton ATPase subunit H (468 aa).

The protein belongs to the V-ATPase H subunit family. V-ATPase is a heteromultimeric enzyme made up of two complexes: the ATP-hydrolytic V1 complex and the proton translocation V0 complex. The V1 complex consists of three catalytic AB heterodimers that form a heterohexamer, three peripheral stalks each consisting of EG heterodimers, one central rotor including subunits D and F, and the regulatory subunits C and H. The proton translocation complex V0 consists of the proton transport subunit a, a ring of proteolipid subunits c9c'', rotary subunit d, subunits e and f, and the accessory subunits VhaAC45 and ATP6AP2.

Its function is as follows. Subunit of the V1 complex of vacuolar(H+)-ATPase (V-ATPase), a multisubunit enzyme composed of a peripheral complex (V1) that hydrolyzes ATP and a membrane integral complex (V0) that translocates protons. V-ATPase is responsible for acidifying and maintaining the pH of intracellular compartments and in some cell types, is targeted to the plasma membrane, where it is responsible for acidifying the extracellular environment. Subunit H is essential for V-ATPase activity, but not for the assembly of the complex. This Drosophila melanogaster (Fruit fly) protein is V-type proton ATPase subunit H (VhaSFD).